Consider the following 77-residue polypeptide: Phytosulfokines 5 (77 aa).

The signal sequence occupies residues 1–24 (MVKFTTFLCIIALLLCSTLTHASA). Residues 25-68 (RLNPTSVYPEENSFKKLEQGEVICEGVGEEECFLIRRTLVAHTD) constitute a propeptide that is removed on maturation. Sulfotyrosine is present on residues Y69 and Y71. Positions 74–77 (NHNP) are excised as a propeptide.

The protein belongs to the phytosulfokine family. Post-translationally, sulfation is important for activity and for the binding to a putative membrane receptor. PSK-beta is an enzymatic derivative of PSK-alpha. In terms of tissue distribution, expressed in stems, roots, mature leaves and flowers. Most abundant in vascular bundles.

It is found in the secreted. Functionally, promotes plant cell differentiation, organogenesis and somatic embryogenesis as well as cell proliferation. May be involved in the low quiescent center cell proliferation. The chain is Phytosulfokines 5 (PSK5) from Arabidopsis thaliana (Mouse-ear cress).